The following is a 206-amino-acid chain: dITP/XTP pyrophosphatase (206 aa).

10–15 (SRNAKK) serves as a coordination point for substrate. Asp-75 (proton acceptor) is an active-site residue. Mg(2+) is bound at residue Asp-75. Substrate is bound by residues Ser-76, 158 to 161 (FGYD), Lys-181, and 186 to 187 (HR).

The protein belongs to the HAM1 NTPase family. In terms of assembly, homodimer. It depends on Mg(2+) as a cofactor.

It carries out the reaction XTP + H2O = XMP + diphosphate + H(+). The catalysed reaction is dITP + H2O = dIMP + diphosphate + H(+). It catalyses the reaction ITP + H2O = IMP + diphosphate + H(+). Pyrophosphatase that catalyzes the hydrolysis of nucleoside triphosphates to their monophosphate derivatives, with a high preference for the non-canonical purine nucleotides XTP (xanthosine triphosphate), dITP (deoxyinosine triphosphate) and ITP. Seems to function as a house-cleaning enzyme that removes non-canonical purine nucleotides from the nucleotide pool, thus preventing their incorporation into DNA/RNA and avoiding chromosomal lesions. The polypeptide is dITP/XTP pyrophosphatase (Nocardia farcinica (strain IFM 10152)).